The following is a 246-amino-acid chain: 5-oxoprolinase subunit A (246 aa).

Belongs to the LamB/PxpA family. In terms of assembly, forms a complex composed of PxpA, PxpB and PxpC.

It carries out the reaction 5-oxo-L-proline + ATP + 2 H2O = L-glutamate + ADP + phosphate + H(+). Functionally, catalyzes the cleavage of 5-oxoproline to form L-glutamate coupled to the hydrolysis of ATP to ADP and inorganic phosphate. This Cupriavidus necator (strain ATCC 17699 / DSM 428 / KCTC 22496 / NCIMB 10442 / H16 / Stanier 337) (Ralstonia eutropha) protein is 5-oxoprolinase subunit A.